Here is a 190-residue protein sequence, read N- to C-terminus: Segregation and condensation protein B (190 aa).

Belongs to the ScpB family. As to quaternary structure, homodimer. Homodimerization may be required to stabilize the binding of ScpA to the Smc head domains. Component of a cohesin-like complex composed of ScpA, ScpB and the Smc homodimer, in which ScpA and ScpB bind to the head domain of Smc. The presence of the three proteins is required for the association of the complex with DNA.

It is found in the cytoplasm. Functionally, participates in chromosomal partition during cell division. May act via the formation of a condensin-like complex containing Smc and ScpA that pull DNA away from mid-cell into both cell halves. This Bacillus cereus (strain AH187) protein is Segregation and condensation protein B.